Reading from the N-terminus, the 529-residue chain is Bifunctional purine biosynthesis protein PurH (529 aa).

The MGS-like domain occupies 1–148; that stretch reads MQQRRPVRRA…KNHKDVAIVV (148 aa).

It belongs to the PurH family.

The enzyme catalyses (6R)-10-formyltetrahydrofolate + 5-amino-1-(5-phospho-beta-D-ribosyl)imidazole-4-carboxamide = 5-formamido-1-(5-phospho-D-ribosyl)imidazole-4-carboxamide + (6S)-5,6,7,8-tetrahydrofolate. The catalysed reaction is IMP + H2O = 5-formamido-1-(5-phospho-D-ribosyl)imidazole-4-carboxamide. The protein operates within purine metabolism; IMP biosynthesis via de novo pathway; 5-formamido-1-(5-phospho-D-ribosyl)imidazole-4-carboxamide from 5-amino-1-(5-phospho-D-ribosyl)imidazole-4-carboxamide (10-formyl THF route): step 1/1. Its pathway is purine metabolism; IMP biosynthesis via de novo pathway; IMP from 5-formamido-1-(5-phospho-D-ribosyl)imidazole-4-carboxamide: step 1/1. The polypeptide is Bifunctional purine biosynthesis protein PurH (Salmonella heidelberg (strain SL476)).